A 390-amino-acid chain; its full sequence is Zinc finger protein 121 (390 aa).

The segment at 88–110 (FEYSDCEEAFVDQSHLQANRITH) adopts a C2H2-type 1; degenerate zinc-finger fold. The C2H2-type 2; degenerate zinc finger occupies 116–138 (YEQKQCGRAFTYSTSHAVSVKMH). 9 C2H2-type zinc fingers span residues 144–166 (YECK…MRTH), 172–194 (YECK…VRIH), 200–222 (YQCK…VRIH), 228–250 (YECN…FKTH), 256–278 (FECK…FRIH), 284–306 (YKCK…VKIH), 312–334 (YECK…IRTH), 340–362 (YICK…VRIH), and 368–390 (YICN…LKTH).

This sequence belongs to the krueppel C2H2-type zinc-finger protein family.

It localises to the nucleus. In terms of biological role, may be involved in transcriptional regulation. The sequence is that of Zinc finger protein 121 (ZNF121) from Homo sapiens (Human).